The sequence spans 312 residues: Ornithine carbamoyltransferase (312 aa).

Carbamoyl phosphate contacts are provided by residues 50 to 53, Q77, R101, and 128 to 131; these read STRT and HPCQ. L-ornithine is bound by residues N160, D224, and 228–229; that span reads SM. Carbamoyl phosphate is bound by residues 264-265 and R292; that span reads CL.

It belongs to the aspartate/ornithine carbamoyltransferase superfamily. OTCase family.

It is found in the cytoplasm. The enzyme catalyses carbamoyl phosphate + L-ornithine = L-citrulline + phosphate + H(+). The protein operates within amino-acid biosynthesis; L-arginine biosynthesis; L-arginine from L-ornithine and carbamoyl phosphate: step 1/3. In terms of biological role, reversibly catalyzes the transfer of the carbamoyl group from carbamoyl phosphate (CP) to the N(epsilon) atom of ornithine (ORN) to produce L-citrulline. This Leifsonia xyli subsp. xyli (strain CTCB07) protein is Ornithine carbamoyltransferase.